The primary structure comprises 550 residues: Chaperonin GroEL (550 aa).

ATP is bound by residues 30–33, lysine 51, 87–91, glycine 415, 481–483, and aspartate 497; these read TLGP, DGTTT, and NAA.

The protein belongs to the chaperonin (HSP60) family. As to quaternary structure, forms a cylinder of 14 subunits composed of two heptameric rings stacked back-to-back. Interacts with the co-chaperonin GroES.

The protein localises to the cytoplasm. It catalyses the reaction ATP + H2O + a folded polypeptide = ADP + phosphate + an unfolded polypeptide.. Together with its co-chaperonin GroES, plays an essential role in assisting protein folding. The GroEL-GroES system forms a nano-cage that allows encapsulation of the non-native substrate proteins and provides a physical environment optimized to promote and accelerate protein folding. The protein is Chaperonin GroEL of Photobacterium profundum (strain SS9).